We begin with the raw amino-acid sequence, 373 residues long: Tomoregulin-1 (373 aa).

The first 36 residues, 1–36 (MGAQAPLRLPAAPPLAVCGYTSVLLLFAFCLPGSGA), serve as a signal peptide directing secretion. Residues 37 to 323 (SNQPAGGGGD…VPSRQKLTHV (287 aa)) lie on the Extracellular side of the membrane. Asn-56 carries an N-linked (GlcNAc...) asparagine glycan. The Kazal-like 1 domain maps to 91-138 (ACQFQCHTNYIPVCGSNGDTYQNECFLRRAACKHQKDITVVARGPCYS). 3 disulfides stabilise this stretch: Cys-92/Cys-122, Cys-96/Cys-115, and Cys-104/Cys-136. Asn-140 is a glycosylation site (N-linked (GlcNAc...) asparagine). Residues 140-162 (NGSGSGEGEEEGSGAGAHRKHSK) form a disordered region. The region spanning 182–230 (VCNIDCSGYSFNPVCASDGSSYNNPCFVREASCIRQEQIDIRHLGHCTD) is the Kazal-like 2 domain. Cystine bridges form between Cys-183–Cys-214, Cys-187–Cys-207, Cys-196–Cys-228, Cys-268–Cys-281, Cys-276–Cys-292, and Cys-294–Cys-303. Positions 264-304 (SHMPCPENLNGYCIHGKCEFIYSTQKASCRCESGYTGQHCE) constitute an EGF-like domain. The chain crosses the membrane as a helical span at residues 324–344 (LIAAIIGAVQIAIIVAIVMCI). Residues 345-373 (TRKCPKNNRGRRQKQNLGHFTSETSSRMV) are Cytoplasmic-facing. The disordered stretch occupies residues 352–373 (NRGRRQKQNLGHFTSETSSRMV). Polar residues predominate over residues 359–373 (QNLGHFTSETSSRMV).

This sequence belongs to the tomoregulin family. May interact with ST14.

The protein resides in the cell membrane. In terms of biological role, neuron-specific restriction factor that prevents herpes simplex virus 1 (HHV-1) infection in the brain by blocking viral entry. Also able to restrict herpes simplex virus 2 (HHV-2) infection, although to a lesser extent. Acts by preventing the association between the viral glycoprotein D (gD) and its cell surface receptor NECTIN1, thereby inhibiting fusion of the virus and the cell membrane. Also able to prevent the association between the viral glycoprotein B (gB) and MYH9/NMMHC-IIA and MYH10/NMMHC-IIB receptors. This is Tomoregulin-1 (Tmeff1) from Rattus norvegicus (Rat).